We begin with the raw amino-acid sequence, 375 residues long: Growth/differentiation factor 8 (375 aa).

An N-terminal signal peptide occupies residues 1–23; that stretch reads MQKLQLCVYIYLFMLIVAGPVDL. Positions 24-266 are excised as a propeptide; it reads NENSEQKENV…VTDTPKRSRR (243 aa). An N-linked (GlcNAc...) asparagine glycan is attached at Asn-71. 4 disulfides stabilise this stretch: Cys-272-Cys-282, Cys-281-Cys-340, Cys-309-Cys-372, and Cys-313-Cys-374.

The protein belongs to the TGF-beta family. In terms of assembly, homodimer; disulfide-linked. Interacts with WFIKKN2, leading to inhibit its activity. Interacts with FSTL3. In terms of processing, synthesized as large precursor molecule that undergoes proteolytic cleavage to generate an N-terminal propeptide and a disulfide linked C-terminal dimer, which is the biologically active molecule. The circulating form consists of a latent complex of the C-terminal dimer and other proteins, including its propeptide, which maintain the C-terminal dimer in a latent, inactive state. Ligand activation requires additional cleavage of the prodomain by a tolloid-like metalloproteinase.

The protein localises to the secreted. In terms of biological role, acts specifically as a negative regulator of skeletal muscle growth. The polypeptide is Growth/differentiation factor 8 (MSTN) (Papio hamadryas (Hamadryas baboon)).